The chain runs to 67 residues: Photosystem II reaction center protein H (67 aa).

Residues 27 to 47 (GAVPVMAFVGVLLLVFLVILL) form a helical membrane-spanning segment.

The protein belongs to the PsbH family. As to quaternary structure, PSII is composed of 1 copy each of membrane proteins PsbA, PsbB, PsbC, PsbD, PsbE, PsbF, PsbH, PsbI, PsbJ, PsbK, PsbL, PsbM, PsbT, PsbX, PsbY, Psb30/Ycf12, peripheral proteins PsbO, CyanoQ (PsbQ), PsbU, PsbV and a large number of cofactors. It forms dimeric complexes.

It localises to the cellular thylakoid membrane. Functionally, one of the components of the core complex of photosystem II (PSII), required for its stability and/or assembly. PSII is a light-driven water:plastoquinone oxidoreductase that uses light energy to abstract electrons from H(2)O, generating O(2) and a proton gradient subsequently used for ATP formation. It consists of a core antenna complex that captures photons, and an electron transfer chain that converts photonic excitation into a charge separation. The sequence is that of Photosystem II reaction center protein H from Prochlorococcus marinus (strain SARG / CCMP1375 / SS120).